The sequence spans 104 residues: Large ribosomal subunit protein uL23 (104 aa).

This sequence belongs to the universal ribosomal protein uL23 family. Part of the 50S ribosomal subunit. Contacts protein L29, and trigger factor when it is bound to the ribosome.

Functionally, one of the early assembly proteins it binds 23S rRNA. One of the proteins that surrounds the polypeptide exit tunnel on the outside of the ribosome. Forms the main docking site for trigger factor binding to the ribosome. This chain is Large ribosomal subunit protein uL23, found in Leptospira borgpetersenii serovar Hardjo-bovis (strain JB197).